Consider the following 258-residue polypeptide: Small ribosomal subunit protein uS3 (258 aa).

A KH type-2 domain is found at 43 to 111; that stretch reads IRKLMSTGLE…QVQLNILEVK (69 aa). The interval 217–258 is disordered; sequence AREQASAAPRARGRADRPRGRRDEGAAPQQAAAPAATTGTEA. The span at 229–241 shows a compositional bias: basic and acidic residues; it reads GRADRPRGRRDEG. A compositionally biased stretch (low complexity) spans 242–258; that stretch reads AAPQQAAAPAATTGTEA.

Belongs to the universal ribosomal protein uS3 family. Part of the 30S ribosomal subunit. Forms a tight complex with proteins S10 and S14.

Its function is as follows. Binds the lower part of the 30S subunit head. Binds mRNA in the 70S ribosome, positioning it for translation. In Beutenbergia cavernae (strain ATCC BAA-8 / DSM 12333 / CCUG 43141 / JCM 11478 / NBRC 16432 / NCIMB 13614 / HKI 0122), this protein is Small ribosomal subunit protein uS3.